Consider the following 368-residue polypeptide: tRNA(Met) cytidine acetate ligase (368 aa).

Residues 7–20, G96, N152, and R175 each bind ATP; that span reads IAEF…HKYL.

The protein belongs to the TmcAL family.

Its subcellular location is the cytoplasm. The enzyme catalyses cytidine(34) in elongator tRNA(Met) + acetate + ATP = N(4)-acetylcytidine(34) in elongator tRNA(Met) + AMP + diphosphate. Its function is as follows. Catalyzes the formation of N(4)-acetylcytidine (ac(4)C) at the wobble position of elongator tRNA(Met), using acetate and ATP as substrates. First activates an acetate ion to form acetyladenylate (Ac-AMP) and then transfers the acetyl group to tRNA to form ac(4)C34. The sequence is that of tRNA(Met) cytidine acetate ligase from Streptococcus pyogenes serotype M49 (strain NZ131).